The chain runs to 584 residues: Poly(A) RNA polymerase protein 2 (584 aa).

A compositionally biased stretch (polar residues) spans 1–11 (MGAKSVTASSS). Disordered regions lie at residues 1–63 (MGAK…LPKD) and 81–147 (EGFD…QELE). The span at 12–35 (KKIKNRHNGKVKKSKKIKKVRKPQ) shows a compositional bias: basic residues. A compositionally biased stretch (basic and acidic residues) spans 53-63 (NEQETNKLPKD). Over residues 130–139 (SEDEQAEQEE) the composition is skewed to acidic residues. Residues aspartate 236 and aspartate 238 each coordinate Mg(2+). 4 residues coordinate ATP: glycine 301, lysine 326, asparagine 431, and arginine 435. In terms of domain architecture, PAP-associated spans 371–431 (NLGVLLIEFF…AIQDPGDESN (61 aa)). The segment at 525–584 (TSTATATTTDDDYEITNPPAKKAKIEEKPESEPAKRNSGETYITVSSEDDDEDGYNPYTL) is disordered. A compositionally biased stretch (basic and acidic residues) spans 547 to 562 (AKIEEKPESEPAKRNS).

The protein belongs to the DNA polymerase type-B-like family. As to quaternary structure, component of the TRAMP complex (also called TRF4 complex) composed of at least HUL4, MTR4, PAP2/TRF4 and either AIR1 or AIR2. Interacts with NOP53 and POL2. Interacts directly with AIR2. Requires Mg(2+) as cofactor. The cofactor is Mn(2+).

It is found in the nucleus. The enzyme catalyses RNA(n) + ATP = RNA(n)-3'-adenine ribonucleotide + diphosphate. In terms of biological role, catalytic subunit of the TRAMP complex which has a poly(A) RNA polymerase activity and is involved in a post-transcriptional quality control mechanism limiting inappropriate expression of genetic information. Polyadenylation is required for the degradative activity of the exosome on several of its nuclear RNA substrates like cryptic transcripts generated by RNA polymerase II and III, or hypomethylated pre-tRNAi-Met. Polyadenylates RNA processing and degradation intermediates of snRNAs, snoRNAs and mRNAs that accumulate in strains lacking a functional exosome. TRF4 is also required for proper nuclear division in mitosis, DNA damage repair and sister chromatid cohesion. Involved in the regulation of histone mRNA levels. May mediate mitotic chromosome condensation. The chain is Poly(A) RNA polymerase protein 2 (PAP2) from Saccharomyces cerevisiae (strain ATCC 204508 / S288c) (Baker's yeast).